Here is a 183-residue protein sequence, read N- to C-terminus: MDIDPYKEFGATVELLSFLPSDFFPSVRDLLDTAAALYRDALESPEHCSPHHTALRQAILCWGDLMTLATWVGTNLEDPASRDLVVSYVNTNVGLKFRQLLWFHISCLTFGRETVLEYLVSFGVWIRTPPAYRPPNAPILSTLPETTVVRRRGRSPRRRTPSPRRRRSQSPRRRRSQSRESQC.

Positions Asn136–Cys183 are disordered. The segment covering Val149 to Ser176 has biased composition (basic residues). Ser155, Ser162, and Ser170 each carry phosphoserine; by host. The 1; half-length repeat unit spans residues Ser155 to Pro161. The 3 X 8 AA repeats of S-P-R-R-R-[PR]-S-Q stretch occupies residues Ser155–Gln177. The short motif at Arg158–Arg175 is the Bipartite nuclear localization signal element. 2 repeat units span residues Ser162–Gln169 and Ser170–Gln177. The interval Gln177 to Cys183 is RNA binding.

The protein belongs to the orthohepadnavirus core antigen family. In terms of assembly, homodimerizes, then multimerizes. Interacts with cytosol exposed regions of viral L glycoprotein present in the reticulum-to-Golgi compartment. Interacts with human FLNB. Phosphorylated form interacts with host importin alpha; this interaction depends on the exposure of the NLS, which itself depends upon genome maturation and/or phosphorylation of the capsid protein. Interacts with host NUP153. Phosphorylated by host SRPK1, SRPK2, and maybe protein kinase C or GAPDH. Phosphorylation is critical for pregenomic RNA packaging. Protein kinase C phosphorylation is stimulated by HBx protein and may play a role in transport of the viral genome to the nucleus at the late step during the viral replication cycle.

The protein localises to the virion. It localises to the host cytoplasm. Functionally, self assembles to form an icosahedral capsid. Most capsids appear to be large particles with an icosahedral symmetry of T=4 and consist of 240 copies of capsid protein, though a fraction forms smaller T=3 particles consisting of 180 capsid proteins. Entering capsids are transported along microtubules to the nucleus. Phosphorylation of the capsid is thought to induce exposure of nuclear localization signal in the C-terminal portion of the capsid protein that allows binding to the nuclear pore complex via the importin (karyopherin-) alpha and beta. Capsids are imported in intact form through the nuclear pore into the nuclear basket, where it probably binds NUP153. Only capsids that contain the mature viral genome can release the viral DNA and capsid protein into the nucleoplasm. Immature capsids get stuck in the basket. Capsids encapsulate the pre-genomic RNA and the P protein. Pre-genomic RNA is reverse-transcribed into DNA while the capsid is still in the cytoplasm. The capsid can then either be directed to the nucleus, providing more genomes for transcription, or bud through the endoplasmic reticulum to provide new virions. This Homo sapiens (Human) protein is Capsid protein.